The chain runs to 128 residues: Fluoride-specific ion channel FluC (128 aa).

4 helical membrane-spanning segments follow: residues 4–24 (LLLVAAGGALGSVARYLVGVQ), 37–57 (TFIVNLTGGLLMGLLAAWLAL), 72–92 (VGVMGGFTTFSAFSLETALMI), and 101–121 (FTYTTASVILSVAAIFAGLLI). Gly-76 and Thr-79 together coordinate Na(+).

This sequence belongs to the fluoride channel Fluc/FEX (TC 1.A.43) family.

The protein localises to the cell inner membrane. It carries out the reaction fluoride(in) = fluoride(out). Its activity is regulated as follows. Na(+) is not transported, but it plays an essential structural role and its presence is essential for fluoride channel function. In terms of biological role, fluoride-specific ion channel. Important for reducing fluoride concentration in the cell, thus reducing its toxicity. The polypeptide is Fluoride-specific ion channel FluC (Caulobacter sp. (strain K31)).